A 103-amino-acid chain; its full sequence is Large ribosomal subunit protein uL24 (103 aa).

This sequence belongs to the universal ribosomal protein uL24 family. As to quaternary structure, part of the 50S ribosomal subunit.

Its function is as follows. One of two assembly initiator proteins, it binds directly to the 5'-end of the 23S rRNA, where it nucleates assembly of the 50S subunit. In terms of biological role, one of the proteins that surrounds the polypeptide exit tunnel on the outside of the subunit. This chain is Large ribosomal subunit protein uL24, found in Bacillus mycoides (strain KBAB4) (Bacillus weihenstephanensis).